The primary structure comprises 523 residues: MANINMADTVPSCDTYLLFNGETLLPIGVRAFIYTAVLAYCFIGLSAITGRFFKSMESIMRHSREVVTVDPHTNATIVKHEKVWNYTIADVALLAFGTSFPQISLATIDAIRNLGQLTAGGLGPGTLVGSAAFDLFPIHAVCVVMPRAGSKKKISDLGVWLVELFWSFWAYIWLYIILEVWTPRVITLWEALLTVLQYGLLLLHAYAQDKRWPYVSIPLARGERPEDWVPAEDASVDYDDNYDGIGDILPGQNEDIVDIFSAHSYSNEGYHHVSEEDVEESSTGLTLKNKWEDTHWFSIWWQQFVDAATLESSVSRKMDSTCLRVIGISWNLIIAPWKMLFAFVPPYEIAHGWIAFICSLIFISGIAYGVTKITDQISCVTGVSPYVIAFTALAAGTSWPDLVASKIAAERQITADSAITNITCSNSVNIYVGIGVPWLVDTMYNYFVYQKPLYIDNAAGLSFSLLVFFATSFGCITVLVLRRVILGAELGGPRMWAWATSVYFMILWVVFVVLSSLKISGVI.

The next 11 helical transmembrane spans lie at 24-44 (LLPI…CFIG), 88-108 (IADV…LATI), 125-145 (GTLV…CVVM), 157-177 (LGVW…LYII), 185-205 (VITL…LLHA), 325-345 (VIGI…AFVP), 349-369 (IAHG…IAYG), 377-397 (ISCV…AAGT), 428-448 (VNIY…NYFV), 461-481 (LSFS…VLVL), and 495-515 (MWAW…VVLS).

It belongs to the Ca(2+):cation antiporter (CaCA) (TC 2.A.19) family. MHX subfamily.

The protein resides in the vacuole membrane. Its function is as follows. Vacuolar transporter that exchanges protons with Mg(2+), Zn(2+) and Fe(2+) ions. May control the partitioning of Mg(2+) and Zn(2+) between plant organs. The chain is Magnesium/proton exchanger 1 (MHX1) from Oryza sativa subsp. japonica (Rice).